Here is a 294-residue protein sequence, read N- to C-terminus: tRNA-cytidine(32) 2-sulfurtransferase (294 aa).

The short motif at 70 to 75 is the PP-loop motif element; sequence SGGKDS. The [4Fe-4S] cluster site is built by Cys-145, Cys-148, and Cys-236.

Belongs to the TtcA family. Homodimer. Mg(2+) serves as cofactor. It depends on [4Fe-4S] cluster as a cofactor.

The protein localises to the cytoplasm. The enzyme catalyses cytidine(32) in tRNA + S-sulfanyl-L-cysteinyl-[cysteine desulfurase] + AH2 + ATP = 2-thiocytidine(32) in tRNA + L-cysteinyl-[cysteine desulfurase] + A + AMP + diphosphate + H(+). Its pathway is tRNA modification. In terms of biological role, catalyzes the ATP-dependent 2-thiolation of cytidine in position 32 of tRNA, to form 2-thiocytidine (s(2)C32). The sulfur atoms are provided by the cysteine/cysteine desulfurase (IscS) system. The protein is tRNA-cytidine(32) 2-sulfurtransferase of Rhizobium meliloti (strain 1021) (Ensifer meliloti).